Consider the following 535-residue polypeptide: Putative beta-glucosidase 41 (535 aa).

A signal peptide spans 1-27; sequence MESLMRLVLVLFPFFVVFFVPLDHVSS. A beta-D-glucoside is bound at residue Gln-49. N-linked (GlcNAc...) asparagine glycosylation occurs at Asn-118. A beta-D-glucoside is bound by residues His-151 and 196-197; that span reads NE. The active-site Proton donor is Glu-197. Residues Cys-216 and Cys-224 are joined by a disulfide bond. Residues Tyr-340 and Glu-413 each coordinate a beta-D-glucoside. The active-site Nucleophile is Glu-413. A glycan (N-linked (GlcNAc...) asparagine) is linked at Asn-445. A beta-D-glucoside is bound by residues Trp-463, 470 to 471, and Phe-479; that span reads EW. An N-linked (GlcNAc...) asparagine glycan is attached at Asn-489.

Belongs to the glycosyl hydrolase 1 family.

It catalyses the reaction Hydrolysis of terminal, non-reducing beta-D-glucosyl residues with release of beta-D-glucose.. This chain is Putative beta-glucosidase 41, found in Arabidopsis thaliana (Mouse-ear cress).